The chain runs to 245 residues: Endogenous retrovirus group K member 5 Env polyprotein (245 aa).

The truncated surface protein stretch occupies residues 1-245; that stretch reads MVTPVTWMDN…TLEFGLEIKL (245 aa).

This sequence belongs to the beta type-B retroviral envelope protein family. HERV class-II K(HML-2) env subfamily. In terms of tissue distribution, expressed in lung, placenta, testis, peripheral blood lymphocytes, and teratocarcinoma cell lines.

Its subcellular location is the virion. Its function is as follows. Retroviral envelope proteins mediate receptor recognition and membrane fusion during early infection. Endogenous envelope proteins may have kept, lost or modified their original function during evolution. The polypeptide is Endogenous retrovirus group K member 5 Env polyprotein (ERVK-5) (Homo sapiens (Human)).